Consider the following 88-residue polypeptide: Small ribosomal subunit protein uS17 (88 aa).

Belongs to the universal ribosomal protein uS17 family. Part of the 30S ribosomal subunit.

In terms of biological role, one of the primary rRNA binding proteins, it binds specifically to the 5'-end of 16S ribosomal RNA. This chain is Small ribosomal subunit protein uS17, found in Pseudomonas fluorescens (strain SBW25).